A 526-amino-acid polypeptide reads, in one-letter code: Alpha-N-acetylgalactosaminide alpha-2,6-sialyltransferase 1 (526 aa).

The Cytoplasmic segment spans residues 1–12 (MTRYCRGLSQRQ). Residues 13–33 (AFLLLTVLALLFILLFVVKDP) traverse the membrane as a helical; Signal-anchor for type II membrane protein segment. Residues 34–526 (RAKDSRCQFI…QRPQSDKAKN (493 aa)) lie on the Lumenal side of the membrane. Positions 49–182 (SAQENQQKAE…TRRRQRLKAS (134 aa)) are disordered. Over residues 81–106 (KDLKKQEREAVQGEQAEGKEKRKLET) the composition is skewed to basic and acidic residues. Residues 161-171 (ATKSPASSPHP) are compositionally biased toward polar residues. Residues Asn206, Asn228, Asn259, Asn303, and Asn388 are each glycosylated (N-linked (GlcNAc...) asparagine). 2 disulfide bridges follow: Cys207/Cys290 and Cys293/Cys461.

The protein belongs to the glycosyltransferase 29 family. Post-translationally, glycosylated; autosialylated. Submaxillary gland, mammary gland, spleen and colon.

It is found in the golgi apparatus membrane. It carries out the reaction a beta-D-galactosyl-(1-&gt;3)-N-acetyl-alpha-D-galactosaminyl derivative + CMP-N-acetyl-beta-neuraminate = a beta-D-galactosyl-(1-&gt;3)-[N-acetyl-alpha-neuraminyl-(2-&gt;6)]-N-acetyl-alpha-D-galactosaminyl derivative + CMP + H(+). It catalyses the reaction a 3-O-[N-acetyl-alpha-D-galactosaminyl]-L-seryl-[protein] + CMP-N-acetyl-beta-neuraminate = a 3-O-[N-acetyl-alpha-neuraminosyl-(2-&gt;6)-N-acetyl-alpha-D-galactosaminyl]-L-seryl-[protein] + CMP + H(+). The catalysed reaction is a 3-O-[N-acetyl-alpha-D-galactosaminyl]-L-threonyl-[protein] + CMP-N-acetyl-beta-neuraminate = a 3-O-[N-acetyl-alpha-neuraminosyl-(2-&gt;6)-N-acetyl-alpha-D-galactosaminyl]-L-threonyl-[protein] + CMP + H(+). The enzyme catalyses a 3-O-[beta-D-galactosyl-(1-&gt;3)-N-acetyl-alpha-D-galactosaminyl]-L-seryl-[protein] + CMP-N-acetyl-beta-neuraminate = a 3-O-{beta-D-galactosyl-(1-&gt;3)-[N-acetyl-alpha-neuraminosyl-(2-&gt;6)]-N-acetyl-alpha-D-galactosaminyl}-L-seryl-[protein] + CMP + H(+). It carries out the reaction a 3-O-[beta-D-galactosyl-(1-&gt;3)-N-acetyl-alpha-D-galactosaminyl]-L-threonyl-[protein] + CMP-N-acetyl-beta-neuraminate = a 3-O-{beta-D-galactosyl-(1-&gt;3)-[N-acetyl-alpha-neuraminosyl-(2-&gt;6)]-N-acetyl-alpha-D-galactosaminyl}-L-threonyl-[protein] + CMP + H(+). It catalyses the reaction a 3-O-[N-acetyl-alpha-neuraminyl-(2-&gt;3)-beta-D-galactosyl-(1-&gt;3)-N-acetyl-alpha-D-galactosaminyl]-L-threonyl-[protein] + CMP-N-acetyl-beta-neuraminate = a 3-O-{alpha-Neu5Ac-(2-&gt;3)-beta-D-Gal-(1-&gt;3)-[alpha-Neu5Ac-(2-&gt;6)]-alpha-D-GalNAc}-L-threonyl-[protein] + CMP + H(+). It participates in protein modification; protein glycosylation. Its function is as follows. Protein sialyltransferase specifically expressed in goblet cells that plays a key role in intestinal host-commensal homeostasis. Conjugates sialic acid with an alpha-2-6 linkage to N-acetylgalactosamine (GalNAc) glycan chains linked to serine or threonine in glycoproteins. Catalyzes the formation of the sialyl-Tn (S-Tn) antigen, an antigen found in intestinal goblet cells. Protein sialylation in globlet cells is essential for mucus integrity and is required to protect the intestinal mucus against excessive bacterial proteolytic degradation. In Mus musculus (Mouse), this protein is Alpha-N-acetylgalactosaminide alpha-2,6-sialyltransferase 1.